A 358-amino-acid chain; its full sequence is Cholesterol galactosyltransferase (358 aa).

This sequence belongs to the glycosyltransferase 2 family.

It carries out the reaction cholesterol + UDP-alpha-D-galactose = cholesteryl 3-beta-D-galactoside + UDP + H(+). It functions in the pathway glycolipid biosynthesis. Functionally, galactosyltransferase involved in the synthesis of cholesterol glycolipids, which are formed by the use of host-derived cholesterol and have been shown to be immunogenic, and possibly contribute to Lyme disease pathogenesis. Catalyzes the formation of cholesteryl beta-D-galactopyranoside (CGal) from cholesterol and UDP-alpha-D-galactose. Cannot use GDP-mannose. The protein is Cholesterol galactosyltransferase of Borreliella burgdorferi (strain ATCC 35210 / DSM 4680 / CIP 102532 / B31) (Borrelia burgdorferi).